Here is a 374-residue protein sequence, read N- to C-terminus: Alanine racemase (374 aa).

The Proton acceptor; specific for D-alanine role is filled by Lys34. An N6-(pyridoxal phosphate)lysine modification is found at Lys34. Position 147 (Arg147) interacts with substrate. Residue Tyr271 is the Proton acceptor; specific for L-alanine of the active site. Substrate is bound at residue Met319.

Belongs to the alanine racemase family. Pyridoxal 5'-phosphate serves as cofactor.

The enzyme catalyses L-alanine = D-alanine. It functions in the pathway amino-acid biosynthesis; D-alanine biosynthesis; D-alanine from L-alanine: step 1/1. In terms of biological role, catalyzes the interconversion of L-alanine and D-alanine. May also act on other amino acids. In Actinobacillus pleuropneumoniae serotype 5b (strain L20), this protein is Alanine racemase (alr).